Reading from the N-terminus, the 218-residue chain is Uracil-DNA glycosylase (218 aa).

Asp-68 serves as the catalytic Proton acceptor.

Belongs to the uracil-DNA glycosylase (UDG) superfamily. UNG family. As to quaternary structure, homodimer. Interacts with protein OPG148. Component of the Uracil-DNA glycosylase(UDG)-OPG148-polymerase complex; OPG148 and UDG form a heterodimeric processivity factor that associates with OPG71 to form the processive polymerase holoenzyme.

It catalyses the reaction Hydrolyzes single-stranded DNA or mismatched double-stranded DNA and polynucleotides, releasing free uracil.. Plays an essential role in viral replication as a component of the DNA polymerase processivity factor. Excises uracil residues from the DNA which can arise as a result of misincorporation of dUMP residues by DNA polymerase or due to deamination of cytosine. In Homo sapiens (Human), this protein is Uracil-DNA glycosylase (OPG116).